The following is a 377-amino-acid chain: Nitric oxide reductase FlRd-NAD(+) reductase (377 aa).

This sequence belongs to the FAD-dependent oxidoreductase family. The cofactor is FAD.

It is found in the cytoplasm. The catalysed reaction is 2 reduced [nitric oxide reductase rubredoxin domain] + NAD(+) + H(+) = 2 oxidized [nitric oxide reductase rubredoxin domain] + NADH. Its pathway is nitrogen metabolism; nitric oxide reduction. Functionally, one of at least two accessory proteins for anaerobic nitric oxide (NO) reductase. Reduces the rubredoxin moiety of NO reductase. The sequence is that of Nitric oxide reductase FlRd-NAD(+) reductase from Salmonella paratyphi B (strain ATCC BAA-1250 / SPB7).